Here is a 136-residue protein sequence, read N- to C-terminus: Small ribosomal subunit protein uS11c (136 aa).

It belongs to the universal ribosomal protein uS11 family. In terms of assembly, part of the 30S ribosomal subunit.

The protein resides in the plastid. In Epifagus virginiana (Beechdrops), this protein is Small ribosomal subunit protein uS11c.